Reading from the N-terminus, the 691-residue chain is Threonine--tRNA ligase (691 aa).

One can recognise a TGS domain in the interval 1-66 (MSAPARPAPA…DADVDVIPVT (66 aa)). Residues 265-571 (DHRKLGVELD…LTEHYAGAFP (307 aa)) are catalytic. Zn(2+) contacts are provided by C370, H421, and H548.

Belongs to the class-II aminoacyl-tRNA synthetase family. As to quaternary structure, homodimer. It depends on Zn(2+) as a cofactor.

It is found in the cytoplasm. The enzyme catalyses tRNA(Thr) + L-threonine + ATP = L-threonyl-tRNA(Thr) + AMP + diphosphate + H(+). In terms of biological role, catalyzes the attachment of threonine to tRNA(Thr) in a two-step reaction: L-threonine is first activated by ATP to form Thr-AMP and then transferred to the acceptor end of tRNA(Thr). Also edits incorrectly charged L-seryl-tRNA(Thr). This is Threonine--tRNA ligase from Mycolicibacterium vanbaalenii (strain DSM 7251 / JCM 13017 / BCRC 16820 / KCTC 9966 / NRRL B-24157 / PYR-1) (Mycobacterium vanbaalenii).